The sequence spans 203 residues: Ribosomal RNA small subunit methyltransferase G (203 aa).

S-adenosyl-L-methionine-binding positions include Gly-73, Leu-78, 124 to 125 (VE), and Arg-138.

Belongs to the methyltransferase superfamily. RNA methyltransferase RsmG family.

It is found in the cytoplasm. It carries out the reaction guanosine(527) in 16S rRNA + S-adenosyl-L-methionine = N(7)-methylguanosine(527) in 16S rRNA + S-adenosyl-L-homocysteine. In terms of biological role, specifically methylates the N7 position of guanine in position 527 of 16S rRNA. In Haemophilus ducreyi (strain 35000HP / ATCC 700724), this protein is Ribosomal RNA small subunit methyltransferase G.